The primary structure comprises 250 residues: Non-specific acid phosphatase (250 aa).

The N-terminal stretch at 1–20 (MKSRYLVFFLPLIVAKYTSA) is a signal peptide.

It belongs to the class A bacterial acid phosphatase family. Homodimer.

It is found in the periplasm. It carries out the reaction a phosphate monoester + H2O = an alcohol + phosphate. The sequence is that of Non-specific acid phosphatase (phoN) from Salmonella typhimurium (strain LT2 / SGSC1412 / ATCC 700720).